The primary structure comprises 216 residues: 3-isopropylmalate dehydratase small subunit 2 (216 aa).

It belongs to the LeuD family. LeuD type 1 subfamily. In terms of assembly, heterodimer of LeuC and LeuD.

It carries out the reaction (2R,3S)-3-isopropylmalate = (2S)-2-isopropylmalate. Its pathway is amino-acid biosynthesis; L-leucine biosynthesis; L-leucine from 3-methyl-2-oxobutanoate: step 2/4. In terms of biological role, catalyzes the isomerization between 2-isopropylmalate and 3-isopropylmalate, via the formation of 2-isopropylmaleate. The protein is 3-isopropylmalate dehydratase small subunit 2 of Bordetella pertussis (strain Tohama I / ATCC BAA-589 / NCTC 13251).